A 70-amino-acid polypeptide reads, in one-letter code: Small integral membrane protein 42 (70 aa).

The chain crosses the membrane as a helical span at residues 26–46 (LVNVLFFFTPLMTLVTLLILV).

It is found in the membrane. In Homo sapiens (Human), this protein is Small integral membrane protein 42.